Here is a 128-residue protein sequence, read N- to C-terminus: Sulfurtransferase TusD (128 aa).

Residue Cys78 is the Cysteine persulfide intermediate of the active site.

This sequence belongs to the DsrE/TusD family. Heterohexamer, formed by a dimer of trimers. The hexameric TusBCD complex contains 2 copies each of TusB, TusC and TusD. The TusBCD complex interacts with TusE.

The protein resides in the cytoplasm. Its function is as follows. Part of a sulfur-relay system required for 2-thiolation of 5-methylaminomethyl-2-thiouridine (mnm(5)s(2)U) at tRNA wobble positions. Accepts sulfur from TusA and transfers it in turn to TusE. This chain is Sulfurtransferase TusD, found in Klebsiella pneumoniae subsp. pneumoniae (strain ATCC 700721 / MGH 78578).